Here is a 187-residue protein sequence, read N- to C-terminus: Threonylcarbamoyl-AMP synthase (187 aa).

The region spanning 4–187 (ILTLDNAVAT…DARSGQILRD (184 aa)) is the YrdC-like domain.

This sequence belongs to the SUA5 family. TsaC subfamily.

The protein resides in the cytoplasm. It carries out the reaction L-threonine + hydrogencarbonate + ATP = L-threonylcarbamoyladenylate + diphosphate + H2O. Functionally, required for the formation of a threonylcarbamoyl group on adenosine at position 37 (t(6)A37) in tRNAs that read codons beginning with adenine. Catalyzes the conversion of L-threonine, HCO(3)(-)/CO(2) and ATP to give threonylcarbamoyl-AMP (TC-AMP) as the acyladenylate intermediate, with the release of diphosphate. This chain is Threonylcarbamoyl-AMP synthase, found in Xanthomonas oryzae pv. oryzae (strain MAFF 311018).